Here is a 375-residue protein sequence, read N- to C-terminus: Trichodiene synthase (375 aa).

It belongs to the trichodiene synthase family.

The catalysed reaction is (2E,6E)-farnesyl diphosphate = trichodiene + diphosphate. It functions in the pathway sesquiterpene biosynthesis; trichothecene biosynthesis. Functionally, TS is a member of the terpene cyclase group of enzymes. It catalyzes the isomerization and cyclization of farnesyl pyro-phosphate to form trichodiene, the first cyclic intermediate in the biosynthetic pathway for trichothecenes. It serves to branch trichothecene biosynthesis from the isoprenoid pathway. The polypeptide is Trichodiene synthase (TRI5) (Fusarium cerealis (Fusarium crookwellense)).